The following is a 540-amino-acid chain: Cytochrome P450 monooxygenase prx8 (540 aa).

A helical membrane pass occupies residues 50 to 68; the sequence is ALGAAIALFACACAYALVA. A glycan (N-linked (GlcNAc...) asparagine) is linked at Asn460. Cys483 contributes to the heme binding site.

Belongs to the cytochrome P450 family. The cofactor is heme.

It localises to the membrane. It participates in sesquiterpene biosynthesis. Cytochrome P450 monooxygenase; part of the gene cluster that mediates the biosynthesis of PR-toxin, a bicyclic sesquiterpene belonging to the eremophilane class and acting as a mycotoxin. The first step of the pathway is catalyzed by the aristolochene synthase which performs the cyclization of trans,trans-farnesyl diphosphate (FPP) to the bicyclic sesquiterpene aristolochene. Following the formation of aristolochene, the non-oxygenated aristolochene is converted to the trioxygenated intermediate eremofortin B, via 7-epi-neopetasone. This conversion appears to involve three enzymes, a hydroxysterol oxidase-like enzyme, the quinone-oxidase prx3 that forms the quinone-type-structure in the bicyclic nucleus of aristolochene with the C8-oxo group and the C-3 hydroxyl group, and the P450 monooxygenase prx9 that introduces the epoxide at the double bond between carbons 1 and 2. No monoxy or dioxy-intermediates have been reported to be released to the broth, so these three early oxidative reactions may be coupled together. Eremofortin B is further oxidized by another P450 monooxygenase, that introduces a second epoxide between carbons 7 and 11 prior to acetylation to eremofortin A by the acetyltransferase prx11. The second epoxidation may be performed by a second P450 monooxygenase. After the acetylation step, eremofortin A is converted to eremofortin C and then to PR-toxin. First the conversion of eremofortin A to eremofortin C proceeds by oxidation of the side chain of the molecule at C-12 and is catalyzed by the short-chain oxidoreductase prx1. The cytochrome P450 monooxygenase prx8 also plays a role in this step. The primary alcohol formed at C-12 is finally oxidized by the short-chain alcohol dehydrogenase prx4 that forms PR-toxin. This is Cytochrome P450 monooxygenase prx8 from Penicillium rubens (strain ATCC 28089 / DSM 1075 / NRRL 1951 / Wisconsin 54-1255) (Penicillium chrysogenum).